A 376-amino-acid polypeptide reads, in one-letter code: DNA polymerase IV (376 aa).

Positions 6–187 (IIHIDMDAFF…LSIGKFYGVG (182 aa)) constitute a UmuC domain. Asp10 and Asp105 together coordinate Mg(2+). Glu106 is a catalytic residue.

The protein belongs to the DNA polymerase type-Y family. In terms of assembly, monomer. Mg(2+) serves as cofactor.

The protein resides in the cytoplasm. The catalysed reaction is DNA(n) + a 2'-deoxyribonucleoside 5'-triphosphate = DNA(n+1) + diphosphate. Poorly processive, error-prone DNA polymerase involved in untargeted mutagenesis. Copies undamaged DNA at stalled replication forks, which arise in vivo from mismatched or misaligned primer ends. These misaligned primers can be extended by PolIV. Exhibits no 3'-5' exonuclease (proofreading) activity. May be involved in translesional synthesis, in conjunction with the beta clamp from PolIII. The sequence is that of DNA polymerase IV from Desulfotalea psychrophila (strain LSv54 / DSM 12343).